The sequence spans 220 residues: Ribosomal RNA large subunit methyltransferase E (220 aa).

Residues G60, W62, D92, D108, and D133 each coordinate S-adenosyl-L-methionine. K173 (proton acceptor) is an active-site residue. Residues 195-220 (APRKPKASRDKSSETFILGRHLKRPR) are disordered.

The protein belongs to the class I-like SAM-binding methyltransferase superfamily. RNA methyltransferase RlmE family.

Its subcellular location is the cytoplasm. It carries out the reaction uridine(2552) in 23S rRNA + S-adenosyl-L-methionine = 2'-O-methyluridine(2552) in 23S rRNA + S-adenosyl-L-homocysteine + H(+). Specifically methylates the uridine in position 2552 of 23S rRNA at the 2'-O position of the ribose in the fully assembled 50S ribosomal subunit. This is Ribosomal RNA large subunit methyltransferase E from Burkholderia lata (strain ATCC 17760 / DSM 23089 / LMG 22485 / NCIMB 9086 / R18194 / 383).